The chain runs to 255 residues: Acetylglutamate kinase (255 aa).

Substrate contacts are provided by residues 40-41 (GG), arginine 62, and asparagine 153.

Belongs to the acetylglutamate kinase family. ArgB subfamily.

It is found in the cytoplasm. The enzyme catalyses N-acetyl-L-glutamate + ATP = N-acetyl-L-glutamyl 5-phosphate + ADP. It participates in amino-acid biosynthesis; L-arginine biosynthesis; N(2)-acetyl-L-ornithine from L-glutamate: step 2/4. Functionally, catalyzes the ATP-dependent phosphorylation of N-acetyl-L-glutamate. This chain is Acetylglutamate kinase, found in Bacillus cereus (strain 03BB102).